The following is a 332-amino-acid chain: Cyclin-D1-binding protein 1 (332 aa).

At Ala-2 the chain carries N-acetylalanine. Interaction with TCF3 stretches follow at residues 2 to 184 and 150 to 332; these read ASAT…VDFV and ISYN…CLLD. Interaction with RPLP0 stretches follow at residues 2 to 190 and 240 to 332; these read ASAT…AHEE and LIIP…CLLD. A required for interaction with CCND1 region spans residues 2–208; sequence ASATAPAAAA…DPYSGLLNDT (207 aa).

Belongs to the CCNDBP1 family. In terms of assembly, interacts with CCND1 and GRAP2. May also interact with COPS5, RPLP0, SIRT6, SYF2 and TCF3. Post-translationally, phosphorylated.

The protein resides in the cytoplasm. Its subcellular location is the nucleus. May negatively regulate cell cycle progression. May act at least in part via inhibition of the cyclin-D1/CDK4 complex, thereby preventing phosphorylation of RB1 and blocking E2F-dependent transcription. This is Cyclin-D1-binding protein 1 (CCNDBP1) from Macaca fascicularis (Crab-eating macaque).